We begin with the raw amino-acid sequence, 60 residues long: MAVPARRTSKAKKNKRRTHYNLTAPTVKFDETTGDYSRSHRVSLKGYYKGRKIAKANAAK.

This sequence belongs to the bacterial ribosomal protein bL32 family.

This is Large ribosomal subunit protein bL32 from Streptococcus mutans serotype c (strain ATCC 700610 / UA159).